Consider the following 248-residue polypeptide: 2,3-bisphosphoglycerate-dependent phosphoglycerate mutase (248 aa).

Residues arginine 8–asparagine 15, threonine 21–glycine 22, arginine 60, glutamate 87–tyrosine 90, lysine 98, arginine 114–arginine 115, and glycine 183–asparagine 184 contribute to the substrate site. Catalysis depends on histidine 9, which acts as the Tele-phosphohistidine intermediate. Catalysis depends on glutamate 87, which acts as the Proton donor/acceptor.

The protein belongs to the phosphoglycerate mutase family. BPG-dependent PGAM subfamily.

It catalyses the reaction (2R)-2-phosphoglycerate = (2R)-3-phosphoglycerate. It participates in carbohydrate degradation; glycolysis; pyruvate from D-glyceraldehyde 3-phosphate: step 3/5. In terms of biological role, catalyzes the interconversion of 2-phosphoglycerate and 3-phosphoglycerate. The protein is 2,3-bisphosphoglycerate-dependent phosphoglycerate mutase of Borreliella burgdorferi (strain ATCC 35210 / DSM 4680 / CIP 102532 / B31) (Borrelia burgdorferi).